A 149-amino-acid chain; its full sequence is 3-hydroxyacyl-[acyl-carrier-protein] dehydratase FabZ (149 aa).

The active site involves His53.

This sequence belongs to the thioester dehydratase family. FabZ subfamily.

It localises to the cytoplasm. The enzyme catalyses a (3R)-hydroxyacyl-[ACP] = a (2E)-enoyl-[ACP] + H2O. Involved in unsaturated fatty acids biosynthesis. Catalyzes the dehydration of short chain beta-hydroxyacyl-ACPs and long chain saturated and unsaturated beta-hydroxyacyl-ACPs. In Neisseria meningitidis serogroup B (strain ATCC BAA-335 / MC58), this protein is 3-hydroxyacyl-[acyl-carrier-protein] dehydratase FabZ.